A 172-amino-acid chain; its full sequence is Large ribosomal subunit protein uL10 (172 aa).

It belongs to the universal ribosomal protein uL10 family. In terms of assembly, part of the ribosomal stalk of the 50S ribosomal subunit. The N-terminus interacts with L11 and the large rRNA to form the base of the stalk. The C-terminus forms an elongated spine to which L12 dimers bind in a sequential fashion forming a multimeric L10(L12)X complex.

Forms part of the ribosomal stalk, playing a central role in the interaction of the ribosome with GTP-bound translation factors. The polypeptide is Large ribosomal subunit protein uL10 (Francisella philomiragia subsp. philomiragia (strain ATCC 25017 / CCUG 19701 / FSC 153 / O#319-036)).